The primary structure comprises 225 residues: Small ribosomal subunit protein uS3 (225 aa).

The KH type-2 domain maps to L38–R106.

The protein belongs to the universal ribosomal protein uS3 family. As to quaternary structure, part of the 30S ribosomal subunit. Forms a tight complex with proteins S10 and S14.

Functionally, binds the lower part of the 30S subunit head. Binds mRNA in the 70S ribosome, positioning it for translation. This is Small ribosomal subunit protein uS3 from Gluconobacter oxydans (strain 621H) (Gluconobacter suboxydans).